The following is a 554-amino-acid chain: Urocanate hydratase (554 aa).

Residues glycine 49–glycine 50, glutamine 127, glycine 173–glycine 175, glutamate 193, arginine 198, asparagine 239–alanine 240, glutamine 260–histidine 264, tyrosine 270–isoleucine 271, and tyrosine 319 contribute to the NAD(+) site. Cysteine 407 is an active-site residue. Glycine 489 is a binding site for NAD(+).

The protein belongs to the urocanase family. It depends on NAD(+) as a cofactor.

Its subcellular location is the cytoplasm. It catalyses the reaction 4-imidazolone-5-propanoate = trans-urocanate + H2O. It functions in the pathway amino-acid degradation; L-histidine degradation into L-glutamate; N-formimidoyl-L-glutamate from L-histidine: step 2/3. Catalyzes the conversion of urocanate to 4-imidazolone-5-propionate. This Bacillus velezensis (strain DSM 23117 / BGSC 10A6 / LMG 26770 / FZB42) (Bacillus amyloliquefaciens subsp. plantarum) protein is Urocanate hydratase.